The sequence spans 331 residues: UPF0324 membrane protein SAR0338 (331 aa).

The next 11 helical transmembrane spans lie at 9–26 (FMIG…SFLA), 31–48 (ILDK…AILY), 69–88 (LLRF…DIIG), 93–115 (LLAI…NKLL), 122–144 (ALLL…APIF), 154–176 (SIGI…YAIF), 183–202 (YGAW…LAGG), 217–234 (LGRV…ILIM), 247–269 (ISIP…VTIP), 273–295 (LNIL…GLNV), and 308–330 (LMTI…HWLY).

Belongs to the UPF0324 family.

The protein resides in the cell membrane. In Staphylococcus aureus (strain MRSA252), this protein is UPF0324 membrane protein SAR0338.